The chain runs to 1023 residues: Transmembrane protein 132A (1023 aa).

An N-terminal signal peptide occupies residues 1 to 35 (MCARMAGRTTAAPRGPYGPWLCLLVALALDVVRVD). At 36–852 (CGQAPLDPVY…VTELELGMYA (817 aa)) the chain is on the extracellular side. The interval 212-246 (AAEGPGGCGSGEENDPGEQALPVGGVELRPADPPQ) is disordered. N-linked (GlcNAc...) asparagine glycosylation is present at N280. Disordered regions lie at residues 512–533 (WRVP…DEAE) and 766–839 (LPPA…MVPA). Residues 515–527 (PGPAEGPAEPAAE) are compositionally biased toward low complexity. Position 529 is a phosphoserine; by FAM20C (S529). The binds to HSPA5/GRP78 stretch occupies residues 611 to 916 (IEVRSPLSDS…RQLDRQSPGP (306 aa)). Residues 671–1023 (LPAPKQEVAL…NYMERIRGSS (353 aa)) form a confers cellular localization similar to full-length form region. A compositionally biased stretch (low complexity) spans 778 to 790 (SSPAWSPPATEAT). Residues 809–823 (GKFERAEEEARKEET) show a composition bias toward basic and acidic residues. Acidic residues predominate over residues 824–836 (EAREEEEEEEEEM). Residues 853-873 (LLGVFCVAIFIFLVNGVVFVL) traverse the membrane as a helical segment. The Cytoplasmic segment spans residues 874–1023 (RYQRKEPPDS…NYMERIRGSS (150 aa)). The segment at 905–961 (LSRQLDRQSPGPPKGEGSCPCESGGGGEAPTLAPGPPGGTTSSSSTLARKEAGGRRK) is disordered.

It belongs to the TMEM132 family. Interacts with HSPA5/GRP78.

It localises to the golgi apparatus membrane. Its subcellular location is the endoplasmic reticulum membrane. In terms of biological role, may play a role in embryonic and postnatal development of the brain. Increased resistance to cell death induced by serum starvation in cultured cells. Regulates cAMP-induced GFAP gene expression via STAT3 phosphorylation. This Homo sapiens (Human) protein is Transmembrane protein 132A (TMEM132A).